We begin with the raw amino-acid sequence, 266 residues long: uncharacterized protein (266 aa).

This is an uncharacterized protein from Mycobacterium tuberculosis (strain CDC 1551 / Oshkosh).